Here is a 523-residue protein sequence, read N- to C-terminus: Cytochrome P450 monooxygenase ple5B (523 aa).

The chain crosses the membrane as a helical span at residues 16-33 (IAAAAAGSAVAVYKLLQL). N-linked (GlcNAc...) asparagine glycosylation is found at N82, N103, N122, N295, N379, and N423. Heme is bound at residue C446.

Belongs to the cytochrome P450 family. It depends on heme as a cofactor.

It is found in the membrane. It functions in the pathway secondary metabolite biosynthesis; terpenoid biosynthesis. In terms of biological role, cytochrome P450 monooxygenase; part of the gene cluster that mediates the biosynthesis of pleuromutilin, a tricyclic diterpene showing antibacterial properties. The geranylgeranyl diphosphate (GGPP) synthase ple4 catalyzes the first step in pleuromutilin biosynthesis. GGPP is then substrate of the premutilin synthase (PS) ple3 to yield premutilin. Premutilin synthase is a bifunctional enzyme composed of the fusion of a class II diterpene cyclase (DTC) and a class I diterpene synthase (DTS), with the corresponding domains and active sites containing characteristic aspartate-rich motifs. GGPP is first converted to mutildienyl-diphosphate (MPP) at the class II DTC site. MPP is subsequently further cyclized at the class I DTS site, followed by a 1,5-hydride shift and addition of water prior to terminating deprotonation, to yield premutilin. The cytochrome P450 monooxygenases ple5 and ple6 hydroxylate premutilin at C-11 and C-3, respectively, producing 11-hydroxypremutilin and 3-hydroxypremutilin. The combination of the actions of both ple5 and ple6 leads to the production of 3,11-dihydroxypremutilin. The short chain dehydrogenase ple7 further converts 3,11-dihydroxypremutilin into mutilin. The acetyltransferase ple2 then acetylates mutilin to produce 14-O-acetylmutilin. Finally, the cytochrome P450 monooxygenase ple1 catalyzes hydroxylation on the alpha position of the acetyl side chain of 14-O-acetylmutilin to yield pleuromutilin. The sequence is that of Cytochrome P450 monooxygenase ple5B from Rhodocybe pseudopiperita (Clitopilus pseudopiperitus).